Consider the following 267-residue polypeptide: Protein PERCC1 (267 aa).

Disordered regions lie at residues 19-88 (HHPF…QLLR), 142-163 (SLED…RPGL), and 247-267 (ACPE…PAEA). A compositionally biased stretch (acidic residues) spans 28-50 (EPPETSEEEEEEEEEEEEEEGEG). A compositionally biased stretch (low complexity) spans 74–83 (PEGPGSPETP).

Plays a critical role in intestinal function. Acts by promoting the development of enteroendocrine cells (EECs) of the gastrointestinal tract and pancreas. It is thereby required for normal enteroendocrine peptide hormone secretion. The protein is Protein PERCC1 of Homo sapiens (Human).